The sequence spans 356 residues: Phosphoribosylformylglycinamidine cyclo-ligase (356 aa).

It belongs to the AIR synthase family.

Its subcellular location is the cytoplasm. The enzyme catalyses 2-formamido-N(1)-(5-O-phospho-beta-D-ribosyl)acetamidine + ATP = 5-amino-1-(5-phospho-beta-D-ribosyl)imidazole + ADP + phosphate + H(+). It functions in the pathway purine metabolism; IMP biosynthesis via de novo pathway; 5-amino-1-(5-phospho-D-ribosyl)imidazole from N(2)-formyl-N(1)-(5-phospho-D-ribosyl)glycinamide: step 2/2. This is Phosphoribosylformylglycinamidine cyclo-ligase from Sinorhizobium medicae (strain WSM419) (Ensifer medicae).